The following is a 331-amino-acid chain: Ferrochelatase (331 aa).

Fe cation is bound by residues histidine 187 and glutamate 286.

Belongs to the ferrochelatase family.

The protein resides in the cytoplasm. The enzyme catalyses heme b + 2 H(+) = protoporphyrin IX + Fe(2+). Its pathway is porphyrin-containing compound metabolism; protoheme biosynthesis; protoheme from protoporphyrin-IX: step 1/1. Catalyzes the ferrous insertion into protoporphyrin IX. The chain is Ferrochelatase from Legionella pneumophila (strain Paris).